The primary structure comprises 313 residues: 4-diphosphocytidyl-2-C-methyl-D-erythritol kinase (313 aa).

K29 is an active-site residue. Position 113-123 (113-123) interacts with ATP; sequence PMGGGVGGGSS. D155 is an active-site residue.

It belongs to the GHMP kinase family. IspE subfamily.

It carries out the reaction 4-CDP-2-C-methyl-D-erythritol + ATP = 4-CDP-2-C-methyl-D-erythritol 2-phosphate + ADP + H(+). It functions in the pathway isoprenoid biosynthesis; isopentenyl diphosphate biosynthesis via DXP pathway; isopentenyl diphosphate from 1-deoxy-D-xylulose 5-phosphate: step 3/6. Its function is as follows. Catalyzes the phosphorylation of the position 2 hydroxy group of 4-diphosphocytidyl-2C-methyl-D-erythritol. This is 4-diphosphocytidyl-2-C-methyl-D-erythritol kinase from Haemophilus influenzae (strain 86-028NP).